Reading from the N-terminus, the 484-residue chain is Aspartyl/glutamyl-tRNA(Asn/Gln) amidotransferase subunit B (484 aa).

The protein belongs to the GatB/GatE family. GatB subfamily. Heterotrimer of A, B and C subunits.

The enzyme catalyses L-glutamyl-tRNA(Gln) + L-glutamine + ATP + H2O = L-glutaminyl-tRNA(Gln) + L-glutamate + ADP + phosphate + H(+). The catalysed reaction is L-aspartyl-tRNA(Asn) + L-glutamine + ATP + H2O = L-asparaginyl-tRNA(Asn) + L-glutamate + ADP + phosphate + 2 H(+). Allows the formation of correctly charged Asn-tRNA(Asn) or Gln-tRNA(Gln) through the transamidation of misacylated Asp-tRNA(Asn) or Glu-tRNA(Gln) in organisms which lack either or both of asparaginyl-tRNA or glutaminyl-tRNA synthetases. The reaction takes place in the presence of glutamine and ATP through an activated phospho-Asp-tRNA(Asn) or phospho-Glu-tRNA(Gln). The chain is Aspartyl/glutamyl-tRNA(Asn/Gln) amidotransferase subunit B from Anaeromyxobacter dehalogenans (strain 2CP-1 / ATCC BAA-258).